A 291-amino-acid chain; its full sequence is Shikimate dehydrogenase (NADP(+)) (291 aa).

Residues 26–28 and Ser73 each bind shikimate; that span reads SLS. The active-site Proton acceptor is Lys77. Shikimate contacts are provided by Asn98 and Asp113. Residues 137 to 141 and Val238 contribute to the NADP(+) site; that span reads GAGGA. Residue Tyr240 participates in shikimate binding. Gly261 lines the NADP(+) pocket.

It belongs to the shikimate dehydrogenase family. Homodimer.

It catalyses the reaction shikimate + NADP(+) = 3-dehydroshikimate + NADPH + H(+). Its pathway is metabolic intermediate biosynthesis; chorismate biosynthesis; chorismate from D-erythrose 4-phosphate and phosphoenolpyruvate: step 4/7. In terms of biological role, involved in the biosynthesis of the chorismate, which leads to the biosynthesis of aromatic amino acids. Catalyzes the reversible NADPH linked reduction of 3-dehydroshikimate (DHSA) to yield shikimate (SA). The chain is Shikimate dehydrogenase (NADP(+)) from Listeria monocytogenes serotype 4b (strain F2365).